The following is a 230-amino-acid chain: Cutinase (230 aa).

An N-terminal signal peptide occupies residues 1-16 (MKFFALTTFLAATASA). Cysteine 47 and cysteine 125 are disulfide-bonded. Serine 136 (nucleophile) is an active-site residue. The cysteines at positions 187 and 194 are disulfide-linked. The active site involves aspartate 191. Catalysis depends on histidine 204, which acts as the Proton donor/acceptor.

Belongs to the cutinase family. In terms of processing, the 2 disulfide bonds play a critical role in holding the catalytic residues in juxta-position; reduction of the disulfide bridges results in the complete inactivation of the enzyme.

It is found in the secreted. It catalyses the reaction cutin + H2O = cutin monomers.. Its function is as follows. Catalyzes the hydrolysis of complex carboxylic polyesters found in the cell wall of plants. Degrades cutin, a macromolecule that forms the structure of the plant cuticle. Allows pathogenic fungi to penetrate through the cuticular barrier into the host plant during the initial stage of fungal infection. This chain is Cutinase (CUTA), found in Fusarium solani subsp. cucurbitae (Neocosmosporum cucurbitae).